Consider the following 248-residue polypeptide: Granulin (248 aa).

This sequence belongs to the polyhedrin family.

Functionally, component of the virus occlusion bodies, which are large proteinaceous structures, that protect the virus from the outside environment for extended periods until they are ingested by insect larvae. The protein is Granulin of Adoxophyes orana granulovirus (AoGV).